A 346-amino-acid polypeptide reads, in one-letter code: MTTVLGIETSCDETAVAIVNNRRICSSVVASQIDLHKRYGGVVPEEASRQHLLTINPCIEQALQTAKLTWNDIDGIAATVAPGLIGALMVGETAAKTLAMIHHKPFLGIHHLEGHIYATYLSEPDWKPPFLCLLVSGGHTSLIHVKDCGVYEQLGTTRDDAAGEAFDKVARLLNLGYPGGPIIDQLATQGNPKRFNLPEGKVSLPQGGYHPYDSSFSGLKTAVLRLVEKLKQEKTEPLPIADLAASFQETVARSLTKKTITCALDHHISHIAVGGGVAANSGLRNHLQEAAKKRNLTVHFPPLKLCTDNAAMIACAACDHLKKGHISSWNLGVQSRLPITEVMTLY.

2 residues coordinate Fe cation: H111 and H115. Residues 134 to 138, D167, G180, D184, and N280 each bind substrate; that span reads LVSGG. Residue D308 coordinates Fe cation.

It belongs to the KAE1 / TsaD family. It depends on Fe(2+) as a cofactor.

It is found in the cytoplasm. The catalysed reaction is L-threonylcarbamoyladenylate + adenosine(37) in tRNA = N(6)-L-threonylcarbamoyladenosine(37) in tRNA + AMP + H(+). Functionally, required for the formation of a threonylcarbamoyl group on adenosine at position 37 (t(6)A37) in tRNAs that read codons beginning with adenine. Is involved in the transfer of the threonylcarbamoyl moiety of threonylcarbamoyl-AMP (TC-AMP) to the N6 group of A37, together with TsaE and TsaB. TsaD likely plays a direct catalytic role in this reaction. The polypeptide is tRNA N6-adenosine threonylcarbamoyltransferase (Crocosphaera subtropica (strain ATCC 51142 / BH68) (Cyanothece sp. (strain ATCC 51142))).